Consider the following 241-residue polypeptide: Ubiquinone biosynthesis O-methyltransferase (241 aa).

S-adenosyl-L-methionine-binding residues include Arg46, Gly66, Asp87, and Met131.

Belongs to the methyltransferase superfamily. UbiG/COQ3 family.

It carries out the reaction a 3-demethylubiquinol + S-adenosyl-L-methionine = a ubiquinol + S-adenosyl-L-homocysteine + H(+). It catalyses the reaction a 3-(all-trans-polyprenyl)benzene-1,2-diol + S-adenosyl-L-methionine = a 2-methoxy-6-(all-trans-polyprenyl)phenol + S-adenosyl-L-homocysteine + H(+). It participates in cofactor biosynthesis; ubiquinone biosynthesis. In terms of biological role, O-methyltransferase that catalyzes the 2 O-methylation steps in the ubiquinone biosynthetic pathway. This is Ubiquinone biosynthesis O-methyltransferase from Bordetella avium (strain 197N).